Reading from the N-terminus, the 539-residue chain is Ell-associated factor Eaf (539 aa).

The interval Thr119–Asp539 is disordered. Polar residues predominate over residues Pro132–Asn146. The span at Gly151–Pro163 shows a compositional bias: pro residues. Over residues Lys174–Asn195 the composition is skewed to polar residues. Ser205 carries the post-translational modification Phosphoserine. Polar residues predominate over residues Arg220–Pro238. 3 stretches are compositionally biased toward low complexity: residues Ser267 to Pro278, Met309 to Gly337, and Asn345 to Ser375. Positions Asp420–Asp435 are enriched in acidic residues. Composition is skewed to low complexity over residues His461–Gln493 and Asn520–Ser533.

The protein belongs to the EAF family.

It is found in the nucleus. Promotes transcriptional elongation by Su(Tpl)/ELL. Essential for development. This Drosophila willistoni (Fruit fly) protein is Ell-associated factor Eaf.